We begin with the raw amino-acid sequence, 298 residues long: Homoserine kinase (298 aa).

92–102 (PLARGLGSSAT) is an ATP binding site.

Belongs to the GHMP kinase family. Homoserine kinase subfamily.

It localises to the cytoplasm. The catalysed reaction is L-homoserine + ATP = O-phospho-L-homoserine + ADP + H(+). Its pathway is amino-acid biosynthesis; L-threonine biosynthesis; L-threonine from L-aspartate: step 4/5. Functionally, catalyzes the ATP-dependent phosphorylation of L-homoserine to L-homoserine phosphate. This chain is Homoserine kinase (thrB), found in Nostoc sp. (strain PCC 7120 / SAG 25.82 / UTEX 2576).